The sequence spans 176 residues: Crossover junction endodeoxyribonuclease RuvC (176 aa).

Residues Asp-12, Glu-72, and Asp-144 contribute to the active site. 3 residues coordinate Mg(2+): Asp-12, Glu-72, and Asp-144.

Belongs to the RuvC family. In terms of assembly, homodimer which binds Holliday junction (HJ) DNA. The HJ becomes 2-fold symmetrical on binding to RuvC with unstacked arms; it has a different conformation from HJ DNA in complex with RuvA. In the full resolvosome a probable DNA-RuvA(4)-RuvB(12)-RuvC(2) complex forms which resolves the HJ. The cofactor is Mg(2+).

It localises to the cytoplasm. The enzyme catalyses Endonucleolytic cleavage at a junction such as a reciprocal single-stranded crossover between two homologous DNA duplexes (Holliday junction).. Its function is as follows. The RuvA-RuvB-RuvC complex processes Holliday junction (HJ) DNA during genetic recombination and DNA repair. Endonuclease that resolves HJ intermediates. Cleaves cruciform DNA by making single-stranded nicks across the HJ at symmetrical positions within the homologous arms, yielding a 5'-phosphate and a 3'-hydroxyl group; requires a central core of homology in the junction. The consensus cleavage sequence is 5'-(A/T)TT(C/G)-3'. Cleavage occurs on the 3'-side of the TT dinucleotide at the point of strand exchange. HJ branch migration catalyzed by RuvA-RuvB allows RuvC to scan DNA until it finds its consensus sequence, where it cleaves and resolves the cruciform DNA. In Methylocella silvestris (strain DSM 15510 / CIP 108128 / LMG 27833 / NCIMB 13906 / BL2), this protein is Crossover junction endodeoxyribonuclease RuvC.